We begin with the raw amino-acid sequence, 457 residues long: UDP-glycosyltransferase 72C1 (457 aa).

Residues serine 272, 343-344, 361-369, and 383-386 each bind UDP-alpha-D-glucose; these read WA, HCGWNSVLE, and YSEQ.

The protein belongs to the UDP-glycosyltransferase family.

The polypeptide is UDP-glycosyltransferase 72C1 (UGT72C1) (Arabidopsis thaliana (Mouse-ear cress)).